The primary structure comprises 508 residues: Photosystem II CP47 reaction center protein (508 aa).

6 consecutive transmembrane segments (helical) span residues 21–36, 101–115, 140–156, 203–218, 237–252, and 457–472; these read AVHL…WAGS, IVLS…IWHW, GIHL…FGAF, IAAG…FHLC, VLSS…AFVV, and CFAL…HGAR.

Belongs to the PsbB/PsbC family. PsbB subfamily. As to quaternary structure, PSII is composed of 1 copy each of membrane proteins PsbA, PsbB, PsbC, PsbD, PsbE, PsbF, PsbH, PsbI, PsbJ, PsbK, PsbL, PsbM, PsbT, PsbX, PsbY, PsbZ, Psb30/Ycf12, at least 3 peripheral proteins of the oxygen-evolving complex and a large number of cofactors. It forms dimeric complexes. Binds multiple chlorophylls. PSII binds additional chlorophylls, carotenoids and specific lipids. serves as cofactor.

The protein resides in the plastid. It is found in the chloroplast thylakoid membrane. Its function is as follows. One of the components of the core complex of photosystem II (PSII). It binds chlorophyll and helps catalyze the primary light-induced photochemical processes of PSII. PSII is a light-driven water:plastoquinone oxidoreductase, using light energy to abstract electrons from H(2)O, generating O(2) and a proton gradient subsequently used for ATP formation. This chain is Photosystem II CP47 reaction center protein, found in Chlorella vulgaris (Green alga).